Reading from the N-terminus, the 339-residue chain is NmrA-like family domain-containing oxidoreductase notA (339 aa).

Residues 13–18, 39–43, 60–61, 81–83, Lys-140, and 164–167 contribute to the NADP(+) site; these read GATGAQ, RKPDS, DG, TNS, and YMGI.

This sequence belongs to the NmrA-type oxidoreductase family.

In terms of biological role, nmrA-like family domain-containing oxidoreductase; part of the gene cluster that mediates the biosynthesis of notoamide, a fungal indole alkaloid that belongs to a family of natural products containing a characteristic bicyclo[2.2.2]diazaoctane core. The first step of notoamide biosynthesis involves coupling of L-proline and L-tryptophan by the bimodular NRPS notE, to produce cyclo-L-tryptophan-L-proline called brevianamide F. The reverse prenyltransferase notF then acts as a deoxybrevianamide E synthase and converts brevianamide F to deoxybrevianamide E via reverse prenylation at C-2 of the indole ring leading to the bicyclo[2.2.2]diazaoctane core. Deoxybrevianamide E is further hydroxylated at C-6 of the indole ring, likely catalyzed by the cytochrome P450 monooxygenase notG, to yield 6-hydroxy-deoxybrevianamide E. 6-hydroxy-deoxybrevianamide E is a specific substrate of the prenyltransferase notC for normal prenylation at C-7 to produce 6-hydroxy-7-prenyl-deoxybrevianamide, also called notoamide S. As the proposed pivotal branching point in notoamide biosynthesis, notoamide S can be diverted to notoamide E through an oxidative pyran ring closure putatively catalyzed by either notH cytochrome P450 monooxygenase or the notD FAD-linked oxidoreductase. This step would be followed by an indole 2,3-epoxidation-initiated pinacol-like rearrangement catalyzed by the notB FAD-dependent monooxygenase leading to the formation of notoamide C and notoamide D. On the other hand notoamide S is converted to notoamide T by notH (or notD), a bifunctional oxidase that also functions as the intramolecular Diels-Alderase responsible for generation of (+)-notoamide T. To generate antipodal (-)-notoaminide T, notH' (or notD') in Aspergillus versicolor is expected to catalyze a Diels-Alder reaction leading to the opposite stereochemistry. The remaining oxidoreductase notD (or notH) likely catalyzes the oxidative pyran ring formation to yield (+)-stephacidin A. The FAD-dependent monooxygenase notI is highly similar to notB and is predicted to catalyze a similar conversion from (+)-stephacidin A to (-)-notoamide B via the 2,3-epoxidation of (+)-stephacidin A followed by a pinacol-type rearrangement. Finally, it remains unclear which enzyme could be responsible for the final hydroxylation steps leading to notoamide A and sclerotiamide. This is NmrA-like family domain-containing oxidoreductase notA from Aspergillus sp. (strain MF297-2).